The sequence spans 428 residues: Adenylosuccinate synthetase (428 aa).

GTP is bound by residues 12–18 (GDEGKGK) and 40–42 (GHT). Catalysis depends on Asp-13, which acts as the Proton acceptor. Positions 13 and 40 each coordinate Mg(2+). Residues 13–16 (DEGK), 38–41 (NAGH), Thr-128, Arg-142, Gln-223, Thr-238, and Arg-302 each bind IMP. His-41 functions as the Proton donor in the catalytic mechanism. Residue 298 to 304 (TTTGRPR) coordinates substrate. GTP is bound by residues Arg-304, 330 to 332 (KLD), and 412 to 414 (GVG).

This sequence belongs to the adenylosuccinate synthetase family. As to quaternary structure, homodimer. Requires Mg(2+) as cofactor.

The protein localises to the cytoplasm. It catalyses the reaction IMP + L-aspartate + GTP = N(6)-(1,2-dicarboxyethyl)-AMP + GDP + phosphate + 2 H(+). Its pathway is purine metabolism; AMP biosynthesis via de novo pathway; AMP from IMP: step 1/2. Its function is as follows. Plays an important role in the de novo pathway of purine nucleotide biosynthesis. Catalyzes the first committed step in the biosynthesis of AMP from IMP. This chain is Adenylosuccinate synthetase, found in Kineococcus radiotolerans (strain ATCC BAA-149 / DSM 14245 / SRS30216).